Reading from the N-terminus, the 133-residue chain is MIIGIGVDIIEIGRVRQAIRNNKNFLSKLFTEREIDYFISRNMNSEVIAGNFAAKEAVSKALGTGMRGFSFKDIEILRNELGKPEVILHNGANLIGNKLVENNNSLRVHLSISHNNSSAIAYSVLEGEYYGNI.

Residues aspartate 8 and glutamate 56 each contribute to the Mg(2+) site.

Belongs to the P-Pant transferase superfamily. AcpS family. Requires Mg(2+) as cofactor.

The protein localises to the cytoplasm. The catalysed reaction is apo-[ACP] + CoA = holo-[ACP] + adenosine 3',5'-bisphosphate + H(+). Functionally, transfers the 4'-phosphopantetheine moiety from coenzyme A to a Ser of acyl-carrier-protein. The sequence is that of Holo-[acyl-carrier-protein] synthase from Clostridium perfringens (strain SM101 / Type A).